Reading from the N-terminus, the 220-residue chain is 7-carboxy-7-deazaguanine synthase (220 aa).

Substrate-binding positions include 16 to 18 (IQG) and R31. A Radical SAM core domain is found at 22-215 (FAGWPCAFVR…LQLHKYIWNP (194 aa)). [4Fe-4S] cluster is bound by residues C35, C39, and C42. T44 lines the Mg(2+) pocket. Residue T74 participates in substrate binding. G76 contacts S-adenosyl-L-methionine.

The protein belongs to the radical SAM superfamily. 7-carboxy-7-deazaguanine synthase family. Homodimer. The cofactor is [4Fe-4S] cluster. S-adenosyl-L-methionine is required as a cofactor. Mg(2+) serves as cofactor.

It carries out the reaction 6-carboxy-5,6,7,8-tetrahydropterin + H(+) = 7-carboxy-7-deazaguanine + NH4(+). It participates in purine metabolism; 7-cyano-7-deazaguanine biosynthesis. Catalyzes the complex heterocyclic radical-mediated conversion of 6-carboxy-5,6,7,8-tetrahydropterin (CPH4) to 7-carboxy-7-deazaguanine (CDG), a step common to the biosynthetic pathways of all 7-deazapurine-containing compounds. This chain is 7-carboxy-7-deazaguanine synthase, found in Chlorobaculum tepidum (strain ATCC 49652 / DSM 12025 / NBRC 103806 / TLS) (Chlorobium tepidum).